The following is a 106-amino-acid chain: uncharacterized protein (106 aa).

The protein belongs to the csb family.

This is an uncharacterized protein from Dictyostelium discoideum (Social amoeba).